The primary structure comprises 267 residues: Phosphate import ATP-binding protein PstB 2 (267 aa).

One can recognise an ABC transporter domain in the interval 21–262 (LSTKDVHVYY…AKLQSTNDYV (242 aa)). 53–60 (GPSGSGKS) is a binding site for ATP.

This sequence belongs to the ABC transporter superfamily. Phosphate importer (TC 3.A.1.7) family. In terms of assembly, the complex is composed of two ATP-binding proteins (PstB), two transmembrane proteins (PstC and PstA) and a solute-binding protein (PstS).

Its subcellular location is the cell membrane. It catalyses the reaction phosphate(out) + ATP + H2O = ADP + 2 phosphate(in) + H(+). Part of the ABC transporter complex PstSACB involved in phosphate import. Responsible for energy coupling to the transport system. The chain is Phosphate import ATP-binding protein PstB 2 from Streptococcus pneumoniae (strain ATCC BAA-255 / R6).